Consider the following 305-residue polypeptide: MVTEFIFLGLSDSQGLQTFLFMLFFVFYGGIVFGNLLIVITVVSDSHLHSPMYFLLANLSLIDLSLSSVTAPKMITDFFSQRKVISFKGCLVQIFLLHFFGGSEMVILIAMGFDRYIAICKPLHYTTIMCGNACVGIMAVAWGIGFLHSVSQLAFAVHLPFCGPNEVDSFYCDLPRVIKLACTDTYRLDIMVIANSGVLTVCSFVLLIISYTIILMTIQHRPLDKSSKALSTLTAHITVVLLFFGPCVFIYAWPFPIKSLDKFLAVFYSVITPLLNPIIYTLRNKDMKTAIRQLRKWDAHSSVKF.

Over 1-18 (MVTEFIFLGLSDSQGLQT) the chain is Extracellular. A helical transmembrane segment spans residues 19-42 (FLFMLFFVFYGGIVFGNLLIVITV). Residues 43–50 (VSDSHLHS) are Cytoplasmic-facing. A helical membrane pass occupies residues 51 to 72 (PMYFLLANLSLIDLSLSSVTAP). The Extracellular portion of the chain corresponds to 73–93 (KMITDFFSQRKVISFKGCLVQ). Cys90 and Cys182 are joined by a disulfide. A helical transmembrane segment spans residues 94–113 (IFLLHFFGGSEMVILIAMGF). Residues 114–132 (DRYIAICKPLHYTTIMCGN) are Cytoplasmic-facing. A helical membrane pass occupies residues 133-151 (ACVGIMAVAWGIGFLHSVS). Residues 152–188 (QLAFAVHLPFCGPNEVDSFYCDLPRVIKLACTDTYRL) are Extracellular-facing. The helical transmembrane segment at 189–212 (DIMVIANSGVLTVCSFVLLIISYT) threads the bilayer. Residues 213–228 (IILMTIQHRPLDKSSK) lie on the Cytoplasmic side of the membrane. The helical transmembrane segment at 229-251 (ALSTLTAHITVVLLFFGPCVFIY) threads the bilayer. At 252–262 (AWPFPIKSLDK) the chain is on the extracellular side. The helical transmembrane segment at 263–282 (FLAVFYSVITPLLNPIIYTL) threads the bilayer. Residues 283–305 (RNKDMKTAIRQLRKWDAHSSVKF) are Cytoplasmic-facing.

This sequence belongs to the G-protein coupled receptor 1 family.

The protein resides in the cell membrane. Its function is as follows. Odorant receptor. The protein is Olfactory receptor 4F17 (OR4F17) of Homo sapiens (Human).